Here is a 961-residue protein sequence, read N- to C-terminus: ATPase 7, plasma membrane-type (961 aa).

Topologically, residues 1-64 (MTDIEALKAI…EKKESKILKF (64 aa)) are cytoplasmic. A helical membrane pass occupies residues 65-84 (LGFMWNPLSWVMEAAALMAI). Residues 85–96 (GLAHGGGKPADY) are Extracellular-facing. The chain crosses the membrane as a helical span at residues 97 to 117 (HDFVGIVVLLLINSTISFVEE). The Cytoplasmic segment spans residues 118–246 (NNAGNAAAAL…GHFQKVLTAI (129 aa)). A helical transmembrane segment spans residues 247 to 267 (GNFCICSIAVGMAIEIVVIYG). Residues 268–276 (LQKRGYRVG) are Extracellular-facing. A helical transmembrane segment spans residues 277–294 (IDNLLVLLIGGIPIAMPT). The Cytoplasmic segment spans residues 295–643 (VLSVTMAIGA…TSRAIFQRMK (349 aa)). The active-site 4-aspartylphosphate intermediate is the Asp-332. Residues Asp-588 and Asp-592 each coordinate Mg(2+). Residues 644–665 (NYTIYAVSITIRIVMGFMLLCV) traverse the membrane as a helical segment. Residues 666 to 670 (FWEFD) are Extracellular-facing. The helical transmembrane segment at 671 to 693 (FPPFMVLVIAILNDGTIMTISKD) threads the bilayer. Topologically, residues 694 to 709 (RVKPSPTPDCWKLKEI) are cytoplasmic. A helical membrane pass occupies residues 710–730 (FATGVVLGAYLAIMTVVFFWA). Topologically, residues 731-764 (AYETNFFHNIFHVRNFNQHHFKMKDKKVAAHLNE) are extracellular. The helical transmembrane segment at 765-785 (QMASAVYLQVSTISQALIFVT) threads the bilayer. At 786–797 (RSRSWSFVERPG) the chain is on the cytoplasmic side. Residues 798 to 818 (FLLVIAFLIAQLVASVISAMA) traverse the membrane as a helical segment. At 819–826 (NWPFAGIR) the chain is on the extracellular side. A helical membrane pass occupies residues 827-847 (SIGWGWTGVIWIFNIVTYMLL). The Cytoplasmic segment spans residues 848 to 961 (DPIKFLVRYA…EDPNSNNYTI (114 aa)). Thr-894 is modified (phosphothreonine). Residues Ser-910 and Ser-942 each carry the phosphoserine modification. Positions 959–961 (YTI) are interaction with 14-3-3 proteins. The residue at position 960 (Thr-960) is a Phosphothreonine.

The protein belongs to the cation transport ATPase (P-type) (TC 3.A.3) family. Type IIIA subfamily. As to quaternary structure, binds to 14-3-3 proteins. The binding is induced by phosphorylation of Thr-960. Binding to 14-3-3 proteins activates the H(+)-ATPase. As to expression, expressed in guard cells, roots and leaves, and barely in mesophyll cells.

It is found in the membrane. The catalysed reaction is ATP + H2O + H(+)(in) = ADP + phosphate + 2 H(+)(out). Functionally, the plasma membrane H(+) ATPase of plants and fungi generates a proton gradient that drives the active transport of nutrients by H(+)-symport. The resulting external acidification and/or internal alkinization may mediate growth responses. This chain is ATPase 7, plasma membrane-type (AHA7), found in Arabidopsis thaliana (Mouse-ear cress).